The chain runs to 318 residues: GTP 3',8-cyclase (318 aa).

Positions 5 to 217 (KFERKIDYIR…DKIAKKYKFK (213 aa)) constitute a Radical SAM core domain. Arg14 lines the GTP pocket. Residues Cys21 and Cys25 each contribute to the [4Fe-4S] cluster site. Tyr27 is a binding site for S-adenosyl-L-methionine. Cys28 is a [4Fe-4S] cluster binding site. Arg64 lines the GTP pocket. Gly68 serves as a coordination point for S-adenosyl-L-methionine. Thr95 contributes to the GTP binding site. Ser119 provides a ligand contact to S-adenosyl-L-methionine. Position 155 (Lys155) interacts with GTP. Met189 contacts S-adenosyl-L-methionine. Residues Cys248 and Cys251 each contribute to the [4Fe-4S] cluster site. Residue 253 to 255 (RIR) coordinates GTP. Cys265 contributes to the [4Fe-4S] cluster binding site.

Belongs to the radical SAM superfamily. MoaA family. In terms of assembly, monomer and homodimer. It depends on [4Fe-4S] cluster as a cofactor.

The enzyme catalyses GTP + AH2 + S-adenosyl-L-methionine = (8S)-3',8-cyclo-7,8-dihydroguanosine 5'-triphosphate + 5'-deoxyadenosine + L-methionine + A + H(+). It participates in cofactor biosynthesis; molybdopterin biosynthesis. Catalyzes the cyclization of GTP to (8S)-3',8-cyclo-7,8-dihydroguanosine 5'-triphosphate. In Nautilia profundicola (strain ATCC BAA-1463 / DSM 18972 / AmH), this protein is GTP 3',8-cyclase.